A 258-amino-acid chain; its full sequence is 2-oxo-tetronate isomerase (258 aa).

The active-site Proton donor/acceptor is E143. Residues E143, D178, Q204, and E240 each coordinate Mg(2+). E240 (proton donor/acceptor) is an active-site residue.

Belongs to the hyi family. OtnI subfamily.

The catalysed reaction is 2-dehydro-L-erythronate = 3-dehydro-L-erythronate. It catalyses the reaction 2-dehydro-D-erythronate = 3-dehydro-D-erythronate. In terms of biological role, catalyzes the isomerization of 2-oxo-tetronate to 3-oxo-tetronate. This Haemophilus influenzae (strain ATCC 51907 / DSM 11121 / KW20 / Rd) protein is 2-oxo-tetronate isomerase.